The primary structure comprises 180 residues: Inner membrane-spanning protein YciB (180 aa).

A run of 5 helical transmembrane segments spans residues 22 to 42 (IFVASGALIVATLVALAFTWL), 50 to 70 (MTLVTAAMVLVFGTLTLAFHS), 72 to 92 (LFIKWKVTVLYVLFALALLVS), 121 to 141 (LSWAIFFLVCGLLNIYVAFWL), and 149 to 169 (FKVFGLTALTLIFTLISGVYI).

This sequence belongs to the YciB family.

The protein resides in the cell inner membrane. Its function is as follows. Plays a role in cell envelope biogenesis, maintenance of cell envelope integrity and membrane homeostasis. In Yersinia pseudotuberculosis serotype O:1b (strain IP 31758), this protein is Inner membrane-spanning protein YciB.